The sequence spans 119 residues: Large ribosomal subunit protein bL20 (119 aa).

This sequence belongs to the bacterial ribosomal protein bL20 family.

Its function is as follows. Binds directly to 23S ribosomal RNA and is necessary for the in vitro assembly process of the 50S ribosomal subunit. It is not involved in the protein synthesizing functions of that subunit. This is Large ribosomal subunit protein bL20 from Shewanella halifaxensis (strain HAW-EB4).